Reading from the N-terminus, the 243-residue chain is MKIDILTLFPEMFAPLEHSIVGKAKEKGLLDIHYHNFRDHAEKARHVDDEPYGGGQGMLLRAQPIFDTMDSIQATKPRVILLDPAGKPFHQSYAEELALEEELIFICGHYEGYDERIKTLVTDEISLGDFVLTGGELAAMTMIDATVRLIPNVLGKQASHQEDSFSSGLLEYPQYTRPYDYRGMKVPDVLMSGHHEHIRLWRMEQSLKKTYLRRPDLLETYDFSDEEKRIFDKIKSGLSEGEN.

Residues G108 and 127 to 132 (LGDFVL) each bind S-adenosyl-L-methionine.

Belongs to the RNA methyltransferase TrmD family. Homodimer.

The protein resides in the cytoplasm. The enzyme catalyses guanosine(37) in tRNA + S-adenosyl-L-methionine = N(1)-methylguanosine(37) in tRNA + S-adenosyl-L-homocysteine + H(+). Functionally, specifically methylates guanosine-37 in various tRNAs. The polypeptide is tRNA (guanine-N(1)-)-methyltransferase (Streptococcus equi subsp. equi (strain 4047)).